The sequence spans 336 residues: DNA-directed RNA polymerase subunit alpha (336 aa).

The segment at methionine 1–asparagine 226 is alpha N-terminal domain (alpha-NTD). The alpha C-terminal domain (alpha-CTD) stretch occupies residues alanine 241 to leucine 336.

It belongs to the RNA polymerase alpha chain family. In terms of assembly, homodimer. The RNAP catalytic core consists of 2 alpha, 1 beta, 1 beta' and 1 omega subunit. When a sigma factor is associated with the core the holoenzyme is formed, which can initiate transcription.

It carries out the reaction RNA(n) + a ribonucleoside 5'-triphosphate = RNA(n+1) + diphosphate. Functionally, DNA-dependent RNA polymerase catalyzes the transcription of DNA into RNA using the four ribonucleoside triphosphates as substrates. This Arthrobacter sp. (strain FB24) protein is DNA-directed RNA polymerase subunit alpha.